We begin with the raw amino-acid sequence, 603 residues long: Probable potassium transport system protein Kup (603 aa).

The next 12 helical transmembrane spans lie at 15-35 (GLVF…IFLL), 43-63 (VIGV…VEYA), 94-114 (AAFI…DGVI), 136-156 (IGQG…FSVQ), 163-183 (ITWV…FSGI), 201-221 (AISF…EVIL), 244-264 (AWRL…AFII), 284-304 (IYIP…QAMI), 336-356 (IYIG…IFEF), 367-387 (GLAV…IFYL), 391-411 (MFRS…LLSN), and 415-435 (IPHG…LIII).

It belongs to the HAK/KUP transporter (TC 2.A.72) family.

The protein resides in the cell membrane. It carries out the reaction K(+)(in) + H(+)(in) = K(+)(out) + H(+)(out). Its function is as follows. Transport of potassium into the cell. Likely operates as a K(+):H(+) symporter. This Methanosarcina acetivorans (strain ATCC 35395 / DSM 2834 / JCM 12185 / C2A) protein is Probable potassium transport system protein Kup.